The sequence spans 683 residues: Protein hook (683 aa).

Residues asparagine 5–alanine 123 form the Calponin-homology (CH) domain. 2 coiled-coil regions span residues glutamate 135 to glycine 440 and glutamine 484 to valine 594.

Belongs to the hook family. Homodimer. Interacts with microtubules via its N-terminus.

The protein localises to the cytoplasm. Its subcellular location is the cytoskeleton. The protein resides in the endosome. It localises to the synapse. Its function is as follows. Involved in endocytic trafficking by stabilizing organelles of the endocytic pathway. Probably acts as a cytoskeletal linker protein required to tether endosome vesicles to the cytoskeleton. Involved in modulation of endocytosis at stages required for down-regulation of membrane proteins that control synapse size. Not involved in synaptic vesicle recycling. Required in R7 cells for boss endocytosis into multivesicular bodies (MVBs). Has a role in regulating adult longevity. This is Protein hook from Drosophila grimshawi (Hawaiian fruit fly).